A 257-amino-acid polypeptide reads, in one-letter code: MKIGIVGCLGRMGRIIVQEVVGTGGVELSGGVVRRGNGLVGEDMGAVLGCGHGAKITDSKEFLFDCSDVVIDFSSPECMLECVGIASEKRVPLVSGTTGVDERDFRTHAEKVPLLWSCNMSLGVTLLLELVKMAAAGFRGYDVEIRELHHRAKKDAPSGTSLMLGKAVAQGMGVELESQQHTFGSGCRRSGAVGFSVARGGGVIGDHAVMFLGDDEIVELQHRAIDRRVFARGAIKAACWLVGKPAGLYTMSDVLRA.

7-12 is an NAD(+) binding site; sequence GCLGRM. Arg-34 contributes to the NADP(+) binding site. Residues 96–98 and 117–120 each bind NAD(+); these read GTT and SCNM. The active-site Proton donor/acceptor is the His-149. A (S)-2,3,4,5-tetrahydrodipicolinate-binding site is contributed by His-150. Lys-153 functions as the Proton donor in the catalytic mechanism. 159–160 contacts (S)-2,3,4,5-tetrahydrodipicolinate; the sequence is GT.

It belongs to the DapB family.

Its subcellular location is the cytoplasm. It catalyses the reaction (S)-2,3,4,5-tetrahydrodipicolinate + NAD(+) + H2O = (2S,4S)-4-hydroxy-2,3,4,5-tetrahydrodipicolinate + NADH + H(+). It carries out the reaction (S)-2,3,4,5-tetrahydrodipicolinate + NADP(+) + H2O = (2S,4S)-4-hydroxy-2,3,4,5-tetrahydrodipicolinate + NADPH + H(+). Its pathway is amino-acid biosynthesis; L-lysine biosynthesis via DAP pathway; (S)-tetrahydrodipicolinate from L-aspartate: step 4/4. In terms of biological role, catalyzes the conversion of 4-hydroxy-tetrahydrodipicolinate (HTPA) to tetrahydrodipicolinate. The chain is 4-hydroxy-tetrahydrodipicolinate reductase from Anaplasma marginale (strain St. Maries).